The following is a 312-amino-acid chain: Methionyl-tRNA formyltransferase (312 aa).

Position 113–116 (113–116 (SILP)) interacts with (6S)-5,6,7,8-tetrahydrofolate.

Belongs to the Fmt family.

It catalyses the reaction L-methionyl-tRNA(fMet) + (6R)-10-formyltetrahydrofolate = N-formyl-L-methionyl-tRNA(fMet) + (6S)-5,6,7,8-tetrahydrofolate + H(+). Attaches a formyl group to the free amino group of methionyl-tRNA(fMet). The formyl group appears to play a dual role in the initiator identity of N-formylmethionyl-tRNA by promoting its recognition by IF2 and preventing the misappropriation of this tRNA by the elongation apparatus. The sequence is that of Methionyl-tRNA formyltransferase from Hydrogenovibrio crunogenus (strain DSM 25203 / XCL-2) (Thiomicrospira crunogena).